A 469-amino-acid polypeptide reads, in one-letter code: Arginine biosynthesis bifunctional protein ArgJ, chloroplastic (469 aa).

Substrate-binding residues include T213, K239, T250, E337, N464, and T469. The Nucleophile role is filled by T250.

It belongs to the ArgJ family. In terms of assembly, heterodimer of an alpha and a beta chain.

It localises to the plastid. The protein resides in the chloroplast. It catalyses the reaction N(2)-acetyl-L-ornithine + L-glutamate = N-acetyl-L-glutamate + L-ornithine. It carries out the reaction L-glutamate + acetyl-CoA = N-acetyl-L-glutamate + CoA + H(+). Its pathway is amino-acid biosynthesis; L-arginine biosynthesis; L-ornithine and N-acetyl-L-glutamate from L-glutamate and N(2)-acetyl-L-ornithine (cyclic): step 1/1. It functions in the pathway amino-acid biosynthesis; L-arginine biosynthesis; N(2)-acetyl-L-ornithine from L-glutamate: step 1/4. Functionally, catalyzes two activities which are involved in the cyclic version of arginine biosynthesis: the synthesis of acetylglutamate from glutamate and acetyl-CoA, and of ornithine by transacetylation between acetylornithine and glutamate. In Ricinus communis (Castor bean), this protein is Arginine biosynthesis bifunctional protein ArgJ, chloroplastic.